The following is a 289-amino-acid chain: Aquaporin PIP1-1 (289 aa).

The segment at 1–36 (MEGKEEDVRLGANRYSERQPIGTAAQGAGDDKDYKE) is disordered. 2 helical membrane-spanning segments follow: residues 58–78 (IAEF…VMGV) and 93–115 (IAWS…SGGH). Residues 117–119 (NPA) carry the NPA 1 motif. Helical transmembrane passes span 136–156 (IFYI…VKGF), 178–198 (GDGL…VFSA), and 212–232 (ILAP…TIPI). The NPA 2 motif lies at 238 to 240 (NPA). The chain crosses the membrane as a helical span at residues 260–280 (IFWVGPFVGAALAAIYHQVII).

Belongs to the MIP/aquaporin (TC 1.A.8) family. PIP (TC 1.A.8.11) subfamily. In terms of tissue distribution, expressed in roots, leaves and anthers.

The protein resides in the cell membrane. May function as water channel to facilitate the transport of water across cell membrane. In Oryza sativa subsp. japonica (Rice), this protein is Aquaporin PIP1-1 (PIP1-1).